Here is a 195-residue protein sequence, read N- to C-terminus: Imidazoleglycerol-phosphate dehydratase (195 aa).

This sequence belongs to the imidazoleglycerol-phosphate dehydratase family.

It localises to the cytoplasm. It carries out the reaction D-erythro-1-(imidazol-4-yl)glycerol 3-phosphate = 3-(imidazol-4-yl)-2-oxopropyl phosphate + H2O. It participates in amino-acid biosynthesis; L-histidine biosynthesis; L-histidine from 5-phospho-alpha-D-ribose 1-diphosphate: step 6/9. The sequence is that of Imidazoleglycerol-phosphate dehydratase from Pelotomaculum thermopropionicum (strain DSM 13744 / JCM 10971 / SI).